The sequence spans 185 residues: Ribosome-recycling factor (185 aa).

The protein belongs to the RRF family.

It is found in the cytoplasm. In terms of biological role, responsible for the release of ribosomes from messenger RNA at the termination of protein biosynthesis. May increase the efficiency of translation by recycling ribosomes from one round of translation to another. The sequence is that of Ribosome-recycling factor from Acidothermus cellulolyticus (strain ATCC 43068 / DSM 8971 / 11B).